The chain runs to 438 residues: Adenosylhomocysteinase (438 aa).

Threonine 61, aspartate 137, and glutamate 162 together coordinate substrate. 163 to 165 (TTT) provides a ligand contact to NAD(+). Substrate is bound by residues lysine 192 and aspartate 196. NAD(+) contacts are provided by residues asparagine 197, 226-231 (GYGDVG), glutamate 249, asparagine 284, 305-307 (IGH), and asparagine 352.

The protein belongs to the adenosylhomocysteinase family. It depends on NAD(+) as a cofactor.

It localises to the cytoplasm. The enzyme catalyses S-adenosyl-L-homocysteine + H2O = L-homocysteine + adenosine. The protein operates within amino-acid biosynthesis; L-homocysteine biosynthesis; L-homocysteine from S-adenosyl-L-homocysteine: step 1/1. Functionally, may play a key role in the regulation of the intracellular concentration of adenosylhomocysteine. The protein is Adenosylhomocysteinase of Flavobacterium johnsoniae (strain ATCC 17061 / DSM 2064 / JCM 8514 / BCRC 14874 / CCUG 350202 / NBRC 14942 / NCIMB 11054 / UW101) (Cytophaga johnsonae).